A 2343-amino-acid chain; its full sequence is Coagulation factor VIII (2343 aa).

The signal sequence occupies residues 1–19 (MQVELYTCCFLCLLPFSLS). Plastocyanin-like domains lie at 20-199 (ATRK…LLVC) and 207-343 (ERTQ…VDSC). Positions 20 to 343 (ATRKYYLGAV…MEAYVKVDSC (324 aa)) constitute an F5/8 type A 1 domain. Asparagine 233 and asparagine 253 each carry an N-linked (GlcNAc...) asparagine glycan. A sulfotyrosine mark is found at tyrosine 359 and tyrosine 408. Plastocyanin-like domains follow at residues 393–567 (KTWV…LLIC) and 577–724 (NQMM…VSSC). Residues 393–724 (KTWVHYIAAE…MTALLKVSSC (332 aa)) form the F5/8 type A 2 domain. An N-linked (GlcNAc...) asparagine glycan is attached at asparagine 595. Residues tyrosine 731, tyrosine 732, and tyrosine 736 each carry the sulfotyrosine modification. Residues 752 to 761 (PRSFSQNSRH) show a composition bias toward polar residues. Disordered stretches follow at residues 752 to 774 (PRSFSQNSRHPSTKEKQLKATTT) and 828 to 865 (ADDHSRGAIERNKGPPEVASLRPELRHSEDREFTPEPE). The b stretch occupies residues 754–1659 (SFSQNSRHPS…NPPVSKHHQR (906 aa)). Basic and acidic residues-rich tracts occupy residues 828-841 (ADDHSRGAIERNKG) and 850-861 (PELRHSEDREFT). Residues asparagine 877, asparagine 921, asparagine 937, asparagine 938, asparagine 956, asparagine 1007, asparagine 1019, asparagine 1037, asparagine 1062, asparagine 1069, and asparagine 1080 are each glycosylated (N-linked (GlcNAc...) asparagine). Residues 1124 to 1147 (GKNSLSSEQRPSPKQLTSLGSEKS) form a disordered region. Residues 1125 to 1147 (KNSLSSEQRPSPKQLTSLGSEKS) show a composition bias toward polar residues. N-linked (GlcNAc...) asparagine glycosylation is found at asparagine 1179, asparagine 1193, asparagine 1275, asparagine 1290, asparagine 1308, asparagine 1341, asparagine 1391, asparagine 1419, asparagine 1429, asparagine 1453, asparagine 1547, and asparagine 1618. Residues 1302 to 1314 (TTRMSSNASQHVI) are compositionally biased toward polar residues. The segment at 1302-1326 (TTRMSSNASQHVITQRGKRSLKQPR) is disordered. The interval 1592–1632 (KSQKKSQTNTAFKRKDTILPLGPCENNDSTAAINEGQDKPQ) is disordered. 2 positions are modified to sulfotyrosine: tyrosine 1675 and tyrosine 1691. Plastocyanin-like domains lie at 1705–1869 (KTRH…LLIC) and 1879–2032 (GRQV…SKKC). Residues 1705 to 2032 (KTRHYFIAAV…TLFLVYSKKC (328 aa)) form the F5/8 type A 3 domain. Asparagine 1821 carries N-linked (GlcNAc...) asparagine glycosylation. F5/8 type C domains lie at 2032–2180 (CQTP…LLGC) and 2185–2337 (CSMP…VLGC). Cystine bridges form between cysteine 2032-cysteine 2180 and cysteine 2185-cysteine 2337. Residues asparagine 2129 and asparagine 2281 are each glycosylated (N-linked (GlcNAc...) asparagine).

Belongs to the multicopper oxidase family. As to quaternary structure, interacts with vWF. vWF binding is essential for the stabilization of F8 in circulation. In terms of processing, proteolytically cleaved by cathepsin CTSG to produce a partially activated form.

It localises to the secreted. The protein resides in the extracellular space. Factor VIII, along with calcium and phospholipid, acts as a cofactor for factor IXa when it converts factor X to the activated form, factor Xa. The sequence is that of Coagulation factor VIII (F8) from Canis lupus familiaris (Dog).